The primary structure comprises 471 residues: Mannose-1-phosphate guanylyltransferase (471 aa).

Belongs to the mannose-6-phosphate isomerase type 2 family.

The enzyme catalyses alpha-D-mannose 1-phosphate + GTP + H(+) = GDP-alpha-D-mannose + diphosphate. Its pathway is nucleotide-sugar biosynthesis; GDP-alpha-D-mannose biosynthesis; GDP-alpha-D-mannose from alpha-D-mannose 1-phosphate (GTP route): step 1/1. Functionally, involved in the biosynthesis of the K2 capsular polysaccharide biosynthesis. This Klebsiella pneumoniae protein is Mannose-1-phosphate guanylyltransferase (manC).